A 79-amino-acid polypeptide reads, in one-letter code: Tungsten-containing formylmethanofuran dehydrogenase 2 subunit G (79 aa).

4Fe-4S ferredoxin-type domains lie at 2-31 (VKIVIHEERCHGCGNCVIACPVNACNSPNV) and 51-79 (TVSVINEDLCEACMTCELACPVDAIEIKT). Residues Cys-11, Cys-14, Cys-17, Cys-21, Cys-60, Cys-63, Cys-66, and Cys-70 each contribute to the [4Fe-4S] cluster site.

The cofactor is [4Fe-4S] cluster.

The catalysed reaction is N-formylmethanofuran + 2 oxidized [2Fe-2S]-[ferredoxin] + H2O = methanofuran + 2 reduced [2Fe-2S]-[ferredoxin] + CO2 + H(+). The protein operates within one-carbon metabolism; methanogenesis from CO(2); 5,10-methenyl-5,6,7,8-tetrahydromethanopterin from CO(2): step 1/3. Its activity is regulated as follows. Not inactivated by cyanide. Functionally, catalyzes the reversible oxidation of CO(2) and methanofuran (MFR) to N-formylmethanofuran (CHO-MFR). This enzyme is oxygen-labile. May function as an electron transfer protein. The polypeptide is Tungsten-containing formylmethanofuran dehydrogenase 2 subunit G (fwdG) (Methanopyrus kandleri (strain AV19 / DSM 6324 / JCM 9639 / NBRC 100938)).